We begin with the raw amino-acid sequence, 101 residues long: Replication restart protein PriB (101 aa).

The region spanning 1–101 is the SSB domain; the sequence is MATNHLVLSG…LHAENVELKT (101 aa).

The protein belongs to the PriB family. As to quaternary structure, homodimer. Interacts with PriA and DnaT. Component of the replication restart primosome. Primosome assembly occurs via a 'hand-off' mechanism. PriA binds to replication forks, subsequently PriB then DnaT bind; DnaT then displaces ssDNA to generate the helicase loading substrate.

Involved in the restart of stalled replication forks, which reloads the replicative helicase on sites other than the origin of replication; the PriA-PriB pathway is the major replication restart pathway. During primosome assembly it facilitates complex formation between PriA and DnaT on DNA; stabilizes PriA on DNA. Stimulates the DNA unwinding activity of PriA helicase. The sequence is that of Replication restart protein PriB from Shewanella woodyi (strain ATCC 51908 / MS32).